A 444-amino-acid polypeptide reads, in one-letter code: N-succinylarginine dihydrolase (444 aa).

Residues 19 to 28, Asn110, and 137 to 138 contribute to the substrate site; these read SGLSVGNIAS and HR. The active site involves Glu174. Arg214 is a substrate binding site. Residue His250 is part of the active site. 2 residues coordinate substrate: Asp252 and Asn362. The Nucleophile role is filled by Cys368.

The protein belongs to the succinylarginine dihydrolase family. In terms of assembly, homodimer.

The catalysed reaction is N(2)-succinyl-L-arginine + 2 H2O + 2 H(+) = N(2)-succinyl-L-ornithine + 2 NH4(+) + CO2. Its pathway is amino-acid degradation; L-arginine degradation via AST pathway; L-glutamate and succinate from L-arginine: step 2/5. Catalyzes the hydrolysis of N(2)-succinylarginine into N(2)-succinylornithine, ammonia and CO(2). In Aliivibrio fischeri (strain MJ11) (Vibrio fischeri), this protein is N-succinylarginine dihydrolase.